We begin with the raw amino-acid sequence, 252 residues long: Coenzyme F420:L-glutamate ligase (252 aa).

GTP contacts are provided by residues 12–15 (VPLE), 44–45 (HT), and K49. An a divalent metal cation-binding site is contributed by D114. N117 contacts GTP. A divalent metal cation-binding residues include D155, T156, and Q213. 211-218 (MGQADEGT) contacts GTP.

The protein belongs to the CofE family. As to quaternary structure, homodimer. Mg(2+) is required as a cofactor. Mn(2+) serves as cofactor. It depends on K(+) as a cofactor.

The enzyme catalyses oxidized coenzyme F420-0 + GTP + L-glutamate = oxidized coenzyme F420-1 + GDP + phosphate + H(+). It catalyses the reaction oxidized coenzyme F420-1 + GTP + L-glutamate = oxidized coenzyme F420-2 + GDP + phosphate + H(+). It functions in the pathway cofactor biosynthesis; coenzyme F420 biosynthesis. Catalyzes the GTP-dependent successive addition of two or more gamma-linked L-glutamates to the L-lactyl phosphodiester of 7,8-didemethyl-8-hydroxy-5-deazariboflavin (F420-0) to form coenzyme F420-0-glutamyl-glutamate (F420-2) or polyglutamated F420 derivatives. In Methanopyrus kandleri (strain AV19 / DSM 6324 / JCM 9639 / NBRC 100938), this protein is Coenzyme F420:L-glutamate ligase.